A 132-amino-acid polypeptide reads, in one-letter code: MALLLTTVIALTCLGGFASPGPVPPSTALRELIEELVNITQNQKAPLCNGSMVWSINLTAGVYCAALESLINVSGCSAIEKTQRMLSGFCPHKVSAGQFSSLHVRDTKIEVAQFVKDLLLHLKKLFREGRFN.

Residues 1–18 (MALLLTTVIALTCLGGFA) form the signal peptide. N-linked (GlcNAc...) asparagine glycosylation is found at Asn-38, Asn-49, Asn-57, and Asn-72. 2 cysteine pairs are disulfide-bonded: Cys-48-Cys-76 and Cys-64-Cys-90.

It belongs to the IL-4/IL-13 family. Interacts with IL13RA2.

The protein localises to the secreted. In terms of biological role, cytokine that plays important roles in allergic inflammation and immune response to parasite infection. Synergizes with IL2 in regulating interferon-gamma synthesis. Stimulates B-cell proliferation, and activation of eosinophils, basophils, and mast cells. Plays an important role in controlling IL33 activity by modulating the production of transmembrane and soluble forms of interleukin-1 receptor-like 1/IL1RL1. Displays the capacity to antagonize Th1-driven proinflammatory immune response and downregulates synthesis of many proinflammatory cytokines including IL1, IL6, IL10, IL12 and TNF-alpha through a mechanism that partially involves suppression of NF-kappa-B. Also functions on nonhematopoietic cells, including endothelial cells where it induces vascular cell adhesion protein 1/VCAM1, which is important in the recruitment of eosinophils. Exerts its biological effects through its receptors which comprises the IL4R chain and the IL13RA1 chain, to activate JAK1 and TYK2, leading to the activation of STAT6. Aside from IL13RA1, another receptor IL13RA2 acts as a high affinity decoy for IL13 and mediates internalization and depletion of extracellular IL13. The sequence is that of Interleukin-13 (IL13) from Pan troglodytes (Chimpanzee).